A 370-amino-acid polypeptide reads, in one-letter code: ATP synthase gamma chain, chloroplastic (370 aa).

The transit peptide at 1-55 directs the protein to the chloroplast; sequence MKFFCVAGLLASAAAFQAQPAAFTTYSPAVGGATSNVFSESSSPAHRNRRATIVM. Cys145 is a catalytic residue.

This sequence belongs to the ATPase gamma chain family. In terms of assembly, F-type ATPases have 2 components, CF(1) - the catalytic core - and CF(0) - the membrane proton channel. CF(1) has five subunits: alpha(3), beta(3), gamma(1), delta(1), epsilon(1). CF(0) has four main subunits: a, b, b' and c.

The protein localises to the plastid. It is found in the chloroplast thylakoid membrane. Produces ATP from ADP in the presence of a proton gradient across the membrane. The gamma chain is believed to be important in regulating ATPase activity and the flow of protons through the CF(0) complex. In Trieres chinensis (Marine centric diatom), this protein is ATP synthase gamma chain, chloroplastic (ATPC).